Here is a 274-residue protein sequence, read N- to C-terminus: Bis(5'-nucleosyl)-tetraphosphatase, symmetrical (274 aa).

It belongs to the Ap4A hydrolase family.

The enzyme catalyses P(1),P(4)-bis(5'-adenosyl) tetraphosphate + H2O = 2 ADP + 2 H(+). Hydrolyzes diadenosine 5',5'''-P1,P4-tetraphosphate to yield ADP. The polypeptide is Bis(5'-nucleosyl)-tetraphosphatase, symmetrical (Shewanella sp. (strain MR-4)).